Consider the following 130-residue polypeptide: Small ribosomal subunit protein uS11c (130 aa).

The protein belongs to the universal ribosomal protein uS11 family. As to quaternary structure, part of the 30S ribosomal subunit.

Its subcellular location is the plastid. The protein resides in the chloroplast. The protein is Small ribosomal subunit protein uS11c of Chlorella vulgaris (Green alga).